A 133-amino-acid chain; its full sequence is MKKVESMNVVPFIDIMLVLLVIVLTTASFVQTSKLPISIPQVDKDSTDSKDVLDKKQVTIAISNKGSFYFDDKEISFENLKHKVSTLAKDTPIVLQGDKKSNLDNFIKVVDLLQTNNLKQLYILVEDKKNQKN.

The Cytoplasmic segment spans residues 1–9 (MKKVESMNV). The helical transmembrane segment at 10-30 (VPFIDIMLVLLVIVLTTASFV) threads the bilayer. At 31–133 (QTSKLPISIP…LVEDKKNQKN (103 aa)) the chain is on the periplasmic side.

Belongs to the ExbD/TolR family.

The protein localises to the cell inner membrane. The sequence is that of Putative biopolymer transport protein ExbD-like 2 from Helicobacter pylori (strain J99 / ATCC 700824) (Campylobacter pylori J99).